We begin with the raw amino-acid sequence, 321 residues long: MAQVLRGTVADFPGFDERADAETLRKAMKGLGTDEETILTLLTSRSNAQRQEIAVAFKTLFGRDLLDDLKSELTGKFEKLIVALMKPSRLYDAYELKHALKGAGTDEKVLTEIIASRTPEELRAIEQVYEEEYGSSLEDDVVGDTSGYYQRMLVVLLQANRDPDARIDEAQVEQDAQALFQAGELKWGTDEEKFITIFGTRSVSHLRRVFDKYMTISGFQIEETIDRETSGNLEQLLLAVVKSIRSIPAYLAETLYYAMKGAGTDDHTLIRVVVSRSEIDLYNIRKEFRKNFGTSLYSMIKGDTSGDYKKALLLLCGGEDD.

The residue at position 2 (Ala2) is an N-acetylalanine. Annexin repeat units lie at residues 15–86, 87–158, 170–242, and 246–317; these read FDER…ALMK, PSRL…VLLQ, AQVE…AVVK, and SIPA…LLCG. Lys29 is covalently cross-linked (Glycyl lysine isopeptide (Lys-Gly) (interchain with G-Cter in SUMO1); alternate). Lys29 participates in a covalent cross-link: Glycyl lysine isopeptide (Lys-Gly) (interchain with G-Cter in SUMO2); alternate. An N6-acetyllysine mark is found at Lys70, Lys76, Lys79, Lys97, and Lys101. N6-succinyllysine is present on Lys290. A [IL]-x-C-x-x-[DE] motif motif is present at residues 314–320; the sequence is LLCGGED.

Belongs to the annexin family. In terms of assembly, monomer. Binds ATRX and EIF5B. S-nitrosylation is induced by interferon-gamma and oxidatively-modified low-densitity lipoprotein (LDL(ox)) possibly implicating the iNOS-S100A8/9 transnitrosylase complex.

In terms of biological role, this protein is an anticoagulant protein that acts as an indirect inhibitor of the thromboplastin-specific complex, which is involved in the blood coagulation cascade. In Bos taurus (Bovine), this protein is Annexin A5 (ANXA5).